Consider the following 349-residue polypeptide: Protein-glutamate methylesterase/protein-glutamine glutaminase (349 aa).

Positions 5 to 122 (RVLSVDDSAL…REGMLAYSEM (118 aa)) constitute a Response regulatory domain. Residue Asp56 is modified to 4-aspartylphosphate. Positions 152-344 (LLSSEKLIAI…QQMLAKISAG (193 aa)) constitute a CheB-type methylesterase domain. Catalysis depends on residues Ser164, His190, and Asp286.

It belongs to the CheB family. Phosphorylated by CheA. Phosphorylation of the N-terminal regulatory domain activates the methylesterase activity.

It is found in the cytoplasm. The catalysed reaction is [protein]-L-glutamate 5-O-methyl ester + H2O = L-glutamyl-[protein] + methanol + H(+). It carries out the reaction L-glutaminyl-[protein] + H2O = L-glutamyl-[protein] + NH4(+). Involved in chemotaxis. Part of a chemotaxis signal transduction system that modulates chemotaxis in response to various stimuli. Catalyzes the demethylation of specific methylglutamate residues introduced into the chemoreceptors (methyl-accepting chemotaxis proteins or MCP) by CheR. Also mediates the irreversible deamidation of specific glutamine residues to glutamic acid. In Escherichia coli O6:K15:H31 (strain 536 / UPEC), this protein is Protein-glutamate methylesterase/protein-glutamine glutaminase.